The sequence spans 264 residues: 3-methyl-2-oxobutanoate hydroxymethyltransferase (264 aa).

Residues Asp45 and Asp84 each contribute to the Mg(2+) site. Residues 45 to 46 (DS), Asp84, and Lys112 each bind 3-methyl-2-oxobutanoate. Glu114 contacts Mg(2+). Catalysis depends on Glu181, which acts as the Proton acceptor.

Belongs to the PanB family. In terms of assembly, homodecamer; pentamer of dimers. Mg(2+) is required as a cofactor.

It localises to the cytoplasm. It catalyses the reaction 3-methyl-2-oxobutanoate + (6R)-5,10-methylene-5,6,7,8-tetrahydrofolate + H2O = 2-dehydropantoate + (6S)-5,6,7,8-tetrahydrofolate. Its pathway is cofactor biosynthesis; (R)-pantothenate biosynthesis; (R)-pantoate from 3-methyl-2-oxobutanoate: step 1/2. Functionally, catalyzes the reversible reaction in which hydroxymethyl group from 5,10-methylenetetrahydrofolate is transferred onto alpha-ketoisovalerate to form ketopantoate. The sequence is that of 3-methyl-2-oxobutanoate hydroxymethyltransferase from Escherichia coli O127:H6 (strain E2348/69 / EPEC).